The chain runs to 931 residues: Probable ubiquitin-like-specific protease 2B (931 aa).

Positions 204-224 (SLSDRSALSEASDSEDDEEDW) are disordered. Residues 215-224 (SDSEDDEEDW) are compositionally biased toward acidic residues. Residues His-489, Asp-522, and Cys-577 contribute to the active site. The disordered stretch occupies residues 825–931 (HEEEIDESPP…PTGEAEEMEK (107 aa)). The span at 839-851 (SLKSATVGSNTAD) shows a compositional bias: polar residues. Basic and acidic residues predominate over residues 873–904 (NDRDEEKPLEHDLEIGDKTSEDVGDDCDQKEP).

Belongs to the peptidase C48 family.

In terms of biological role, protease that catalyzes two essential functions in the SUMO pathway: processing of full-length SUMOs to their mature forms and deconjugation of SUMO from targeted proteins. In Arabidopsis thaliana (Mouse-ear cress), this protein is Probable ubiquitin-like-specific protease 2B (ULP2B).